Consider the following 432-residue polypeptide: Ornithine decarboxylase (432 aa).

Lys98 bears the N6-(pyridoxal phosphate)lysine mark. Residues Ser229, Gly266, and 296-299 each bind pyridoxal 5'-phosphate; that span reads EPGR. 341-342 is a substrate binding site; that stretch reads FD. Residue Cys377 is the Proton donor; shared with dimeric partner of the active site. Position 378 (Asp378) interacts with substrate. Pyridoxal 5'-phosphate is bound at residue Tyr407.

It belongs to the Orn/Lys/Arg decarboxylase class-II family. Homodimer. Only the dimer is catalytically active, as the active sites are constructed of residues from both monomers. The cofactor is pyridoxal 5'-phosphate.

The protein resides in the cytoplasm. It catalyses the reaction L-ornithine + H(+) = putrescine + CO2. The protein operates within amine and polyamine biosynthesis; putrescine biosynthesis via L-ornithine pathway; putrescine from L-ornithine: step 1/1. With respect to regulation, inhibited by antizyme (AZ) OAZ1 in response to polyamine levels. AZ inhibits the assembly of the functional homodimer by binding to ODC monomers and targeting them for ubiquitin-independent proteolytic destruction by the 26S proteasome. In terms of biological role, catalyzes the first and rate-limiting step of polyamine biosynthesis that converts ornithine into putrescine, which is the precursor for the polyamines, spermidine and spermine. Polyamines are essential for cell proliferation and are implicated in cellular processes, ranging from DNA replication to apoptosis. The chain is Ornithine decarboxylase (spe1) from Schizosaccharomyces pombe (strain 972 / ATCC 24843) (Fission yeast).